The sequence spans 330 residues: Aspartate--ammonia ligase (330 aa).

This sequence belongs to the class-II aminoacyl-tRNA synthetase family. AsnA subfamily.

The protein localises to the cytoplasm. It carries out the reaction L-aspartate + NH4(+) + ATP = L-asparagine + AMP + diphosphate + H(+). The protein operates within amino-acid biosynthesis; L-asparagine biosynthesis; L-asparagine from L-aspartate (ammonia route): step 1/1. The polypeptide is Aspartate--ammonia ligase (Haemophilus ducreyi (strain 35000HP / ATCC 700724)).